A 485-amino-acid chain; its full sequence is E3 ubiquitin-protein ligase RNF8 (485 aa).

Residues 38-92 (VTVGRGFGVTYQLVSKICPLMISRNHCVLKQNPEGQWTIMDNKSLNGVWLNRARL) enclose the FHA domain. The required for interaction with PIWIL1 stretch occupies residues 68 to 72 (QNPEG). Serine 157 is subject to Phosphoserine. The tract at residues 181 to 220 (CESGQPVKSQGKGEVASTPSDNLDPKLTALEPSKTTGAPI) is disordered. The segment at 403–441 (CIICSEYFIEAVTLNCAHSFCSYCINEWMKRKIECPICR) adopts an RING-type zinc-finger fold.

It belongs to the RNF8 family. Homodimer. Forms a E2-E3 ubiquitin ligase complex composed of the RNF8 homodimer and a E2 heterodimer of UBE2N and UBE2V2. Interacts with class III E2s, including UBE2E1, UBE2E2, and UBE2E3 and with UBE2N. Interacts with RXRA. Interacts (via FHA domain) with ATM-phosphorylated MDC1. Interacts (via FHA domain) with 'Thr-4827' phosphorylated HERC2 (via C-terminus). Interacts with PIWIL1; leading to sequester RNF8 in the cytoplasm. Interacts with WRAP53/TCAB1. In terms of assembly, (Microbial infection) Interacts (via FHA domain) with phosphorylated human herpesvirus 1 ICP0 protein; leading to RNF8 degradation by the proteasome. Post-translationally, autoubiquitinated through 'Lys-48' and 'Lys-63' of ubiquitin. 'Lys-63' polyubiquitination is mediated by UBE2N. 'Lys-29'-type polyubiquitination is also observed, but it doesn't require its own functional RING-type zinc finger. In terms of tissue distribution, ubiquitous. In fetal tissues, highest expression in brain, thymus and liver. In adult tissues, highest levels in brain and testis, lowest levels in peripheral blood cells.

The protein resides in the nucleus. It localises to the cytoplasm. It is found in the midbody. Its subcellular location is the chromosome. The protein localises to the telomere. It carries out the reaction S-ubiquitinyl-[E2 ubiquitin-conjugating enzyme]-L-cysteine + [acceptor protein]-L-lysine = [E2 ubiquitin-conjugating enzyme]-L-cysteine + N(6)-ubiquitinyl-[acceptor protein]-L-lysine.. Its pathway is protein modification; protein ubiquitination. In terms of biological role, E3 ubiquitin-protein ligase that plays a key role in DNA damage signaling via 2 distinct roles: by mediating the 'Lys-63'-linked ubiquitination of histones H2A and H2AX and promoting the recruitment of DNA repair proteins at double-strand breaks (DSBs) sites, and by catalyzing 'Lys-48'-linked ubiquitination to remove target proteins from DNA damage sites. Following DNA DSBs, it is recruited to the sites of damage by ATM-phosphorylated MDC1 and catalyzes the 'Lys-63'-linked ubiquitination of histones H2A and H2AX, thereby promoting the formation of TP53BP1 and BRCA1 ionizing radiation-induced foci (IRIF). Also controls the recruitment of UIMC1-BRCC3 (RAP80-BRCC36) and PAXIP1/PTIP to DNA damage sites. Promotes the recruitment of NBN to DNA damage sites by catalyzing 'Lys-6'-linked ubiquitination of NBN. Also recruited at DNA interstrand cross-links (ICLs) sites and catalyzes 'Lys-63'-linked ubiquitination of histones H2A and H2AX, leading to recruitment of FAAP20/C1orf86 and Fanconi anemia (FA) complex, followed by interstrand cross-link repair. H2A ubiquitination also mediates the ATM-dependent transcriptional silencing at regions flanking DSBs in cis, a mechanism to avoid collision between transcription and repair intermediates. Promotes the formation of 'Lys-63'-linked polyubiquitin chains via interactions with the specific ubiquitin-conjugating UBE2N/UBC13 and ubiquitinates non-histone substrates such as PCNA. Substrates that are polyubiquitinated at 'Lys-63' are usually not targeted for degradation. Also catalyzes the formation of 'Lys-48'-linked polyubiquitin chains via interaction with the ubiquitin-conjugating UBE2L6/UBCH8, leading to degradation of substrate proteins such as CHEK2, JMJD2A/KDM4A and KU80/XRCC5: it is still unclear how the preference toward 'Lys-48'- versus 'Lys-63'-linked ubiquitination is regulated but it could be due to RNF8 ability to interact with specific E2 specific ligases. For instance, interaction with phosphorylated HERC2 promotes the association between RNF8 and UBE2N/UBC13 and favors the specific formation of 'Lys-63'-linked ubiquitin chains. Promotes non-homologous end joining (NHEJ) by promoting the 'Lys-48'-linked ubiquitination and degradation the of KU80/XRCC5. Following DNA damage, mediates the ubiquitination and degradation of JMJD2A/KDM4A in collaboration with RNF168, leading to unmask H4K20me2 mark and promote the recruitment of TP53BP1 at DNA damage sites. Following DNA damage, mediates the ubiquitination and degradation of POLD4/p12, a subunit of DNA polymerase delta. In the absence of POLD4, DNA polymerase delta complex exhibits higher proofreading activity. In addition to its function in damage signaling, also plays a role in higher-order chromatin structure by mediating extensive chromatin decondensation. Involved in the activation of ATM by promoting histone H2B ubiquitination, which indirectly triggers histone H4 'Lys-16' acetylation (H4K16ac), establishing a chromatin environment that promotes efficient activation of ATM kinase. Required in the testis, where it plays a role in the replacement of histones during spermatogenesis. At uncapped telomeres, promotes the joining of deprotected chromosome ends by inducing H2A ubiquitination and TP53BP1 recruitment, suggesting that it may enhance cancer development by aggravating telomere-induced genome instability in case of telomeric crisis. Promotes the assembly of RAD51 at DNA DSBs in the absence of BRCA1 and TP53BP1 Also involved in class switch recombination in immune system, via its role in regulation of DSBs repair. May be required for proper exit from mitosis after spindle checkpoint activation and may regulate cytokinesis. May play a role in the regulation of RXRA-mediated transcriptional activity. Not involved in RXRA ubiquitination by UBE2E2. The sequence is that of E3 ubiquitin-protein ligase RNF8 from Homo sapiens (Human).